The primary structure comprises 170 residues: Dual-action ribosomal maturation protein DarP (170 aa).

The protein belongs to the DarP family.

The protein localises to the cytoplasm. Functionally, member of a network of 50S ribosomal subunit biogenesis factors which assembles along the 30S-50S interface, preventing incorrect 23S rRNA structures from forming. Promotes peptidyl transferase center (PTC) maturation. This is Dual-action ribosomal maturation protein DarP from Neisseria meningitidis serogroup A / serotype 4A (strain DSM 15465 / Z2491).